A 268-amino-acid chain; its full sequence is 4-hydroxy-tetrahydrodipicolinate reductase (268 aa).

NAD(+) is bound by residues 8 to 13 (GACGKM), Asp-34, 95 to 97 (GTT), and 121 to 124 (APNF). Residue His-151 is the Proton donor/acceptor of the active site. His-152 serves as a coordination point for (S)-2,3,4,5-tetrahydrodipicolinate. Lys-155 functions as the Proton donor in the catalytic mechanism. Position 161–162 (161–162 (GT)) interacts with (S)-2,3,4,5-tetrahydrodipicolinate.

It belongs to the DapB family.

Its subcellular location is the cytoplasm. The enzyme catalyses (S)-2,3,4,5-tetrahydrodipicolinate + NAD(+) + H2O = (2S,4S)-4-hydroxy-2,3,4,5-tetrahydrodipicolinate + NADH + H(+). It catalyses the reaction (S)-2,3,4,5-tetrahydrodipicolinate + NADP(+) + H2O = (2S,4S)-4-hydroxy-2,3,4,5-tetrahydrodipicolinate + NADPH + H(+). Its pathway is amino-acid biosynthesis; L-lysine biosynthesis via DAP pathway; (S)-tetrahydrodipicolinate from L-aspartate: step 4/4. Catalyzes the conversion of 4-hydroxy-tetrahydrodipicolinate (HTPA) to tetrahydrodipicolinate. This chain is 4-hydroxy-tetrahydrodipicolinate reductase, found in Dictyoglomus turgidum (strain DSM 6724 / Z-1310).